Consider the following 204-residue polypeptide: Casparian strip membrane protein 2 (204 aa).

The Cytoplasmic segment spans residues 1 to 42 (MKNESTFIDVPAESSSAMKGKAPLIGVARDHTTSGSGGYNRG). A helical membrane pass occupies residues 43–63 (LAIFDFLLRLAAIVAALAAAA). The Extracellular portion of the chain corresponds to 64-92 (TMGTSDETLPFFTQFLQFEASYDDLPTFQ). A helical membrane pass occupies residues 93–113 (FFVIAMALVGGYLVLSLPISV). The Cytoplasmic portion of the chain corresponds to 114–125 (VTILRPLATAPR). A helical transmembrane segment spans residues 126-146 (LLLLVLDTGVLALNTAAASSA). Residues 147 to 178 (AAISYLAHSGNQNTNWLPICQQFGDFCQKSSG) lie on the Extracellular side of the membrane. Residues 179 to 199 (AVVSAFVSVVFFTILVVISGV) form a helical membrane-spanning segment. Residues 200-204 (ALKRH) lie on the Cytoplasmic side of the membrane.

This sequence belongs to the Casparian strip membrane proteins (CASP) family. In terms of assembly, homodimer and heterodimers with other CASP proteins. Interacts with CASP1, CASP3 and CASP4.

It is found in the cell membrane. In terms of biological role, regulates membrane-cell wall junctions and localized cell wall deposition. Required for establishment of the Casparian strip membrane domain (CSD) and the subsequent formation of Casparian strips, a cell wall modification of the root endodermis that determines an apoplastic barrier between the intraorganismal apoplasm and the extraorganismal apoplasm and prevents lateral diffusion. This Arabidopsis thaliana (Mouse-ear cress) protein is Casparian strip membrane protein 2 (CASP2).